The sequence spans 154 residues: Secreted RxLR effector protein PITG_21681 (154 aa).

An N-terminal signal peptide occupies residues 1 to 20; the sequence is MRRYAALMVIDAVLLSTSQA. The interval 42–70 is disordered; the sequence is SAERDGGIPNKRSLRRISVTESNDGERDE. The RxLR-dEER signature appears at 53-72; sequence RSLRRISVTESNDGERDEER.

This sequence belongs to the RxLR effector family.

It localises to the secreted. It is found in the host cell. Its function is as follows. Secreted effector that is involved in host plant infection. Increases the susceptibility to P.infestans and reduces the plant growth. Affects the expression of host genes. The polypeptide is Secreted RxLR effector protein PITG_21681 (Phytophthora infestans (strain T30-4) (Potato late blight agent)).